Consider the following 99-residue polypeptide: Large ribosomal subunit protein uL23cz/uL23cy (99 aa).

The tract at residues 1–37 (MGGVENPVSTDKAIRLPERKQYSSNAEPNPSKTEVKR) is disordered. The span at 12 to 21 (KAIRLPERKQ) shows a compositional bias: basic and acidic residues. Over residues 22–32 (YSSNAEPNPSK) the composition is skewed to polar residues.

It belongs to the universal ribosomal protein uL23 family. As to quaternary structure, part of the 50S ribosomal subunit.

The protein localises to the plastid. Its subcellular location is the chloroplast. In terms of biological role, binds to 23S rRNA. The sequence is that of Large ribosomal subunit protein uL23cz/uL23cy (rpl23-A) from Selaginella uncinata (Blue spike-moss).